Reading from the N-terminus, the 237-residue chain is Ribosomally synthesized cyclic peptide ustiloxin B precursosr (237 aa).

Positions Met1–Ala19 are cleaved as a signal peptide. 2 consecutive propeptides follow at residues Ala20–Arg22 and His234–His237.

UstA is processed by the subtilisin-like endoprotease kex2 that is outside the ustiloxin B gene cluster, at the C-terminal side of Arg-Lys, after transfer to Golgi apparatus through the endoplasmic reticulum (ER). Cleavage by kex2 generates 16 peptides YAIG-I to YAIG-XVI. To process the precursor peptide further, at least two peptidases are necessary to cleave the N-terminal and C-terminal sides of the Tyr-Ala-Ile-Gly core peptide which serves as backbone for the synthesis of ustiloxin B, through cyclization and modification of the tyrosine. One of the two peptidases must be the serine peptidase ustP; and the other pepdidase is probably ustH. Macrocyclization of the core peptide derived from ustA requires the tyrosinase ustQ, as well as the homologous oxidases ustYa and ustYb, and leads to the production of the first cyclization product N-desmethylustiloxin F. For the formation of N-desmethylustiloxin F, three oxidation steps are required, hydroxylation at the benzylic position, hydroxylation at either the aromatic ring of Tyr or beta-position of Ile, and oxidative cyclization. UstQ may catalyze the oxidation of a phenol moiety, whereas the ustYa and ustYb are most likely responsible for the remaining two-step oxidations. N-desmethylustiloxin F is then methylated by ustM to yield ustiloxin F which in turn substrate of the cytochrome P450 monooxygenase ustC which catalyzes the formation of S-deoxyustiloxin H. The flavoprotein monooxygenases ustF1 and ustF2 then participate in the modification of the side chain of S-deoxyustiloxin H, leading to the synthesis of an oxime intermediate, via ustiloxin H. Finally, carboxylative dehydration performed by the cysteine desulfurase-like protein ustD yields ustiloxin B.

It functions in the pathway mycotoxin biosynthesis. Functionally, ribosomally synthesized cyclic peptide ustiloxin B precursor: Part of the gene cluster that mediates the biosynthesis of the secondary metabolite ustiloxin B, an antimitotic tetrapeptide. The ustA translated product contains a 16-fold repeated peptide embedding the tetrapeptide Tyr-Ala-Ile-Gly, that is converted into the cyclic moiety of ustiloxin B. This chain is Ribosomally synthesized cyclic peptide ustiloxin B precursosr, found in Aspergillus flavus (strain ATCC 200026 / FGSC A1120 / IAM 13836 / NRRL 3357 / JCM 12722 / SRRC 167).